The following is a 310-amino-acid chain: N-acetyl-gamma-glutamyl-phosphate reductase (310 aa).

Residue Cys117 is part of the active site.

Belongs to the NAGSA dehydrogenase family. Type 2 subfamily.

The protein localises to the cytoplasm. The enzyme catalyses N-acetyl-L-glutamate 5-semialdehyde + phosphate + NADP(+) = N-acetyl-L-glutamyl 5-phosphate + NADPH + H(+). It functions in the pathway amino-acid biosynthesis; L-arginine biosynthesis; N(2)-acetyl-L-ornithine from L-glutamate: step 3/4. Catalyzes the NADPH-dependent reduction of N-acetyl-5-glutamyl phosphate to yield N-acetyl-L-glutamate 5-semialdehyde. The sequence is that of N-acetyl-gamma-glutamyl-phosphate reductase from Rhizobium etli (strain CIAT 652).